Here is a 371-residue protein sequence, read N- to C-terminus: Putative RNA-binding protein Luc7-like 1 (371 aa).

Coiled-coil stretches lie at residues 87-177 (MDHL…RNSM) and 218-259 (FIQI…LSRR). The segment covering 232-257 (VAEKQEKRNQDRLRRREEREREERLS) has biased composition (basic and acidic residues). The disordered stretch occupies residues 232 to 371 (VAEKQEKRNQ…RSEEKEAGEI (140 aa)). The span at 258–317 (RRSGSRTRDRRRSRSRDRRRRRSRSTSRERRKLSRSRSRDRHRRHRSRSRSHSRGHRRAS) shows a compositional bias: basic residues. 2 stretches are compositionally biased toward basic and acidic residues: residues 318 to 351 (RDRSAKYKFSRERASREESWESGRSERGPPDWRL) and 361 to 371 (RRSEEKEAGEI). Phosphoserine is present on residues Ser-332, Ser-336, and Ser-363.

Belongs to the Luc7 family. Ubiquitous.

May bind to RNA via its Arg/Ser-rich domain. This chain is Putative RNA-binding protein Luc7-like 1 (LUC7L), found in Homo sapiens (Human).